The following is a 244-amino-acid chain: Thiol S-methyltransferase TMT1B (244 aa).

Residues 1–23 (MDALVLFLQLLVLLLTLPLHLLA) form the signal peptide.

The protein belongs to the methyltransferase superfamily.

Its subcellular location is the endoplasmic reticulum membrane. It localises to the lipid droplet. The protein localises to the microsome. The protein resides in the cytoplasm. It is found in the cytosol. The catalysed reaction is a thiol + S-adenosyl-L-methionine = a methyl thioether + S-adenosyl-L-homocysteine + H(+). Its function is as follows. Thiol S-methyltransferase that catalyzes the transfer of a methyl group from S-adenosyl-L-methionine to alkyl and phenolic thiol-containing acceptor substrates. Together with TMT1B accounts for most of S-thiol methylation activity in the endoplasmic reticulum of hepatocytes. Selectively methylates S-centered nucleophiles from metabolites such as hydrogen sulfide and dithiothreitol. The protein is Thiol S-methyltransferase TMT1B of Mus musculus (Mouse).